The chain runs to 254 residues: MSADKSQLSSPPQLWQLTSPASRRRWRCASSLRPVSLCGRGWCESTRWVALVSGDHRGRGVIYYSYYCNFVSLNLFRAARLTTPCICLIYPDDFFLRTRNGRHLSRHSFIDHDSLMIRLPLTRQRENRKVKDDRALGVLFSFSIMKARGSRENASKRRPSQTQYDTHLRTNQRITITRTAESHEPVNQRHKIFTQSFLRTFRNQQVNKDQQRKTILELKKVASLPYEPAAFSIYTRYNIFINVSSLSPDVILFL.

This Human cytomegalovirus (strain Eisenhardt) (HHV-5) protein is 30 kDa major early protein.